We begin with the raw amino-acid sequence, 308 residues long: Homoserine O-acetyltransferase (308 aa).

Catalysis depends on cysteine 142, which acts as the Acyl-thioester intermediate. Positions 163 and 192 each coordinate substrate. Catalysis depends on histidine 235, which acts as the Proton acceptor. The active site involves glutamate 237. Arginine 249 contributes to the substrate binding site.

This sequence belongs to the MetA family.

The protein localises to the cytoplasm. It carries out the reaction L-homoserine + acetyl-CoA = O-acetyl-L-homoserine + CoA. Its pathway is amino-acid biosynthesis; L-methionine biosynthesis via de novo pathway; O-acetyl-L-homoserine from L-homoserine: step 1/1. In terms of biological role, transfers an acetyl group from acetyl-CoA to L-homoserine, forming acetyl-L-homoserine. This chain is Homoserine O-acetyltransferase, found in Rhizobium rhizogenes (strain K84 / ATCC BAA-868) (Agrobacterium radiobacter).